We begin with the raw amino-acid sequence, 122 residues long: Large ribosomal subunit protein uL14 (122 aa).

This sequence belongs to the universal ribosomal protein uL14 family. As to quaternary structure, part of the 50S ribosomal subunit. Forms a cluster with proteins L3 and L19. In the 70S ribosome, L14 and L19 interact and together make contacts with the 16S rRNA in bridges B5 and B8.

Its function is as follows. Binds to 23S rRNA. Forms part of two intersubunit bridges in the 70S ribosome. The protein is Large ribosomal subunit protein uL14 of Cupriavidus taiwanensis (strain DSM 17343 / BCRC 17206 / CCUG 44338 / CIP 107171 / LMG 19424 / R1) (Ralstonia taiwanensis (strain LMG 19424)).